The primary structure comprises 194 residues: Dof zinc finger protein DOF4.2 (194 aa).

The Dof-type zinc finger occupies 21–75 (RVCPRCYSDQTRFSYFNNNKKSQPRYKCKNCCRCWTHGGVLRNIPVTGICDKSNL). The Zn(2+) site is built by cysteine 23, cysteine 26, cysteine 48, and cysteine 51.

The protein localises to the nucleus. Its function is as follows. Transcription factor that binds specifically to a 5'-AA[AG]G-3' consensus core sequence. This Arabidopsis thaliana (Mouse-ear cress) protein is Dof zinc finger protein DOF4.2 (DOF4.2).